The sequence spans 560 residues: Dihydroxy-acid dehydratase (560 aa).

D80 serves as a coordination point for Mg(2+). Position 121 (C121) interacts with [2Fe-2S] cluster. Residues D122 and K123 each coordinate Mg(2+). Residue K123 is modified to N6-carboxylysine. Residue C194 coordinates [2Fe-2S] cluster. E447 contacts Mg(2+). The Proton acceptor role is filled by S473.

It belongs to the IlvD/Edd family. Homodimer. Requires [2Fe-2S] cluster as cofactor. The cofactor is Mg(2+).

The enzyme catalyses (2R)-2,3-dihydroxy-3-methylbutanoate = 3-methyl-2-oxobutanoate + H2O. The catalysed reaction is (2R,3R)-2,3-dihydroxy-3-methylpentanoate = (S)-3-methyl-2-oxopentanoate + H2O. Its pathway is amino-acid biosynthesis; L-isoleucine biosynthesis; L-isoleucine from 2-oxobutanoate: step 3/4. It functions in the pathway amino-acid biosynthesis; L-valine biosynthesis; L-valine from pyruvate: step 3/4. Functions in the biosynthesis of branched-chain amino acids. Catalyzes the dehydration of (2R,3R)-2,3-dihydroxy-3-methylpentanoate (2,3-dihydroxy-3-methylvalerate) into 2-oxo-3-methylpentanoate (2-oxo-3-methylvalerate) and of (2R)-2,3-dihydroxy-3-methylbutanoate (2,3-dihydroxyisovalerate) into 2-oxo-3-methylbutanoate (2-oxoisovalerate), the penultimate precursor to L-isoleucine and L-valine, respectively. The protein is Dihydroxy-acid dehydratase of Chlorobaculum tepidum (strain ATCC 49652 / DSM 12025 / NBRC 103806 / TLS) (Chlorobium tepidum).